We begin with the raw amino-acid sequence, 68 residues long: MSKLGVLLTICLLLFALTAVPLDGDQPADRPAERMQDDISSERHPMFDAVRDCCPLPACPFGCNPCCG.

An N-terminal signal peptide occupies residues 1–19; sequence MSKLGVLLTICLLLFALTA. The propeptide occupies 20-51; sequence VPLDGDQPADRPAERMQDDISSERHPMFDAVR. Cystine bridges form between C53-C67, C54-C63, and C59-C66. A 4-hydroxyproline mark is found at P55 and P65. At C67 the chain carries Cysteine amide.

Expressed by the venom duct.

It localises to the secreted. Its function is as follows. Intracranially injection into mice does not elicit symptoms. This Conus marmoreus (Marble cone) protein is Conotoxin mr3g.